Consider the following 169-residue polypeptide: Inorganic pyrophosphatase (169 aa).

N-formylmethionine is present on Met-1. Residues Lys-28, Arg-42, and Tyr-54 each coordinate substrate. Residues Asp-64, Asp-69, and Asp-101 each coordinate Mg(2+). A substrate-binding site is contributed by Tyr-138.

The protein belongs to the PPase family. Homohexamer. It depends on Mg(2+) as a cofactor.

The protein localises to the cytoplasm. The enzyme catalyses diphosphate + H2O = 2 phosphate + H(+). In terms of biological role, catalyzes the hydrolysis of inorganic pyrophosphate (PPi) forming two phosphate ions. The protein is Inorganic pyrophosphatase of Nostoc sp. (strain PCC 7120 / SAG 25.82 / UTEX 2576).